Consider the following 697-residue polypeptide: Long-chain-fatty-acid--CoA ligase 6 (697 aa).

Residues Leu-25 to Thr-45 form a helical; Signal-anchor for type III membrane protein membrane-spanning segment. Over His-46–Met-697 the chain is Cytoplasmic.

The protein belongs to the ATP-dependent AMP-binding enzyme family. It depends on Mg(2+) as a cofactor. Expressed predominantly in brain and, to a much lesser extent, in heart and adrenal.

Its subcellular location is the mitochondrion outer membrane. The protein localises to the peroxisome membrane. The protein resides in the microsome membrane. It localises to the endoplasmic reticulum membrane. The enzyme catalyses a long-chain fatty acid + ATP + CoA = a long-chain fatty acyl-CoA + AMP + diphosphate. It carries out the reaction (5Z,8Z,11Z,14Z)-eicosatetraenoate + ATP + CoA = (5Z,8Z,11Z,14Z)-eicosatetraenoyl-CoA + AMP + diphosphate. The catalysed reaction is 15-hydroxy-(5Z,8Z,11Z,13E)-eicosatetraenoate + ATP + CoA = 15-hydroxy-(5Z,8Z,11Z,13E)-eicosatetraenoyl-CoA + AMP + diphosphate. It catalyses the reaction 12-hydroxy-(5Z,8Z,10E,14Z)-eicosatetraenoate + ATP + CoA = 12-hydroxy-(5Z,8Z,10E,14Z)-eicosatetraenoyl-CoA + AMP + diphosphate. The enzyme catalyses 5-hydroxy-(6E,8Z,11Z,14Z)-eicosatetraenoate + ATP + CoA = 5-hydroxy-(6E,8Z,11Z,14Z)-eicosatetraenoyl-CoA + AMP + diphosphate. It carries out the reaction hexadecanoate + ATP + CoA = hexadecanoyl-CoA + AMP + diphosphate. The catalysed reaction is (E)-hexadec-2-enoate + ATP + CoA = (2E)-hexadecenoyl-CoA + AMP + diphosphate. Functionally, catalyzes the conversion of long-chain fatty acids to their active form acyl-CoA for both synthesis of cellular lipids, and degradation via beta-oxidation. Plays an important role in fatty acid metabolism in brain and the acyl-CoAs produced may be utilized exclusively for the synthesis of the brain lipid. In Rattus norvegicus (Rat), this protein is Long-chain-fatty-acid--CoA ligase 6.